The sequence spans 541 residues: Chaperonin GroEL 2 (541 aa).

ATP contacts are provided by residues 29–32 (TLGP), 86–90 (DGTTT), Gly-413, 476–478 (NAA), and Asp-492.

It belongs to the chaperonin (HSP60) family. Forms a cylinder of 14 subunits composed of two heptameric rings stacked back-to-back. Interacts with the co-chaperonin GroES.

The protein localises to the secreted. The protein resides in the capsule. Its subcellular location is the cell surface. It is found in the cell wall. It catalyses the reaction ATP + H2O + a folded polypeptide = ADP + phosphate + an unfolded polypeptide.. Functionally, together with its co-chaperonin GroES, plays an essential role in assisting protein folding. The GroEL-GroES system forms a nano-cage that allows encapsulation of the non-native substrate proteins and provides a physical environment optimized to promote and accelerate protein folding. This is Chaperonin GroEL 2 from Mycobacterium ulcerans (strain Agy99).